Reading from the N-terminus, the 387-residue chain is 3-ketoacyl-CoA thiolase (387 aa).

Residue Cys91 is the Acyl-thioester intermediate of the active site. Residues His343 and Cys373 each act as proton acceptor in the active site.

It belongs to the thiolase-like superfamily. Thiolase family. As to quaternary structure, heterotetramer of two alpha chains (FadB) and two beta chains (FadA).

The protein resides in the cytoplasm. The enzyme catalyses an acyl-CoA + acetyl-CoA = a 3-oxoacyl-CoA + CoA. It functions in the pathway lipid metabolism; fatty acid beta-oxidation. Its function is as follows. Catalyzes the final step of fatty acid oxidation in which acetyl-CoA is released and the CoA ester of a fatty acid two carbons shorter is formed. This Escherichia coli (strain UTI89 / UPEC) protein is 3-ketoacyl-CoA thiolase.